Consider the following 401-residue polypeptide: 8-amino-7-oxononanoate synthase (401 aa).

Residue Arg24 participates in substrate binding. 111–112 (GF) provides a ligand contact to pyridoxal 5'-phosphate. His137 serves as a coordination point for substrate. Ser183, His211, and Thr240 together coordinate pyridoxal 5'-phosphate. N6-(pyridoxal phosphate)lysine is present on Lys243. Substrate is bound at residue Thr357.

This sequence belongs to the class-II pyridoxal-phosphate-dependent aminotransferase family. BioF subfamily. Homodimer. Pyridoxal 5'-phosphate is required as a cofactor.

The catalysed reaction is 6-carboxyhexanoyl-[ACP] + L-alanine + H(+) = (8S)-8-amino-7-oxononanoate + holo-[ACP] + CO2. The protein operates within cofactor biosynthesis; biotin biosynthesis. Catalyzes the decarboxylative condensation of pimeloyl-[acyl-carrier protein] and L-alanine to produce 8-amino-7-oxononanoate (AON), [acyl-carrier protein], and carbon dioxide. The sequence is that of 8-amino-7-oxononanoate synthase from Xylella fastidiosa (strain 9a5c).